Here is a 256-residue protein sequence, read N- to C-terminus: MAAESQLKRVIETLRRLGIEEVLKLERRDPQYRAVCNVVKRHGETVGSRLAMLNALISYRLTGKGEEHWEYFGKYFSQLEVIDLCRDFLKYIETSPFLKIGVEARKKRALKACDYVPNLEDLGLTLRQLSHIVGARREQKTLVFTIKILNYAYMCSRGVNRVLPFDIPIPVDYRVARLTWCAGLIDFPPEEALRRYEAVQKIWDAVARETGIPPLHLDTLLWLAGRAVLYGENLHGVPKEVIALFQWRGGCRPPSE.

8-oxoguanine is bound by residues Gln31, Ser58, and Trp69. The interval 125 to 184 (TLRQLSHIVGARREQKTLVFTIKILNYAYMCSRGVNRVLPFDIPIPVDYRVARLTWCAGL) is helix-hairpin-helix. Residue Lys140 is the Schiff-base intermediate with DNA of the active site. Phe144 and Pro170 together coordinate 8-oxoguanine. Residue Asp172 is part of the active site. 8-oxoguanine is bound by residues Asp218 and Trp222.

This sequence belongs to the archaeal N-glycosylase/DNA lyase (AGOG) family.

The catalysed reaction is 2'-deoxyribonucleotide-(2'-deoxyribose 5'-phosphate)-2'-deoxyribonucleotide-DNA = a 3'-end 2'-deoxyribonucleotide-(2,3-dehydro-2,3-deoxyribose 5'-phosphate)-DNA + a 5'-end 5'-phospho-2'-deoxyribonucleoside-DNA + H(+). In terms of biological role, DNA repair enzyme that is part of the base excision repair (BER) pathway; protects from oxidative damage by removing the major product of DNA oxidation, 8-oxoguanine (GO), from single- and double-stranded DNA substrates. In Pyrobaculum aerophilum (strain ATCC 51768 / DSM 7523 / JCM 9630 / CIP 104966 / NBRC 100827 / IM2), this protein is N-glycosylase/DNA lyase.